Here is a 130-residue protein sequence, read N- to C-terminus: Small ribosomal subunit protein uS9 (130 aa).

This sequence belongs to the universal ribosomal protein uS9 family.

In Buchnera aphidicola subsp. Baizongia pistaciae (strain Bp), this protein is Small ribosomal subunit protein uS9.